We begin with the raw amino-acid sequence, 80 residues long: Acyl carrier protein (80 aa).

The Carrier domain maps to 1–79; the sequence is MTEEEIFNKI…EAVEYIKSHQ (79 aa). An O-(pantetheine 4'-phosphoryl)serine modification is found at Ser-39.

This sequence belongs to the acyl carrier protein (ACP) family. 4'-phosphopantetheine is transferred from CoA to a specific serine of apo-ACP by AcpS. This modification is essential for activity because fatty acids are bound in thioester linkage to the sulfhydryl of the prosthetic group.

It is found in the cytoplasm. It functions in the pathway lipid metabolism; fatty acid biosynthesis. Carrier of the growing fatty acid chain in fatty acid biosynthesis. The chain is Acyl carrier protein from Lactobacillus johnsonii (strain CNCM I-12250 / La1 / NCC 533).